Reading from the N-terminus, the 236-residue chain is UPF0257 lipoprotein YnfC (236 aa).

A signal peptide spans 1–16 (MKKPLLLTLLCMILAG). The N-palmitoyl cysteine moiety is linked to residue cysteine 17. The S-diacylglycerol cysteine moiety is linked to residue cysteine 17.

The protein belongs to the UPF0257 family.

The protein resides in the cell membrane. This chain is UPF0257 lipoprotein YnfC, found in Salmonella schwarzengrund (strain CVM19633).